We begin with the raw amino-acid sequence, 272 residues long: Phosphatidylglycerol--prolipoprotein diacylglyceryl transferase (272 aa).

The next 7 helical transmembrane spans lie at 17-37, 59-79, 95-115, 129-149, 176-196, 202-222, and 237-257; these read LAIRWYGLMYLAGFIMFLGFG, MLFFGVLGVILGGRLGYVLFY, WEGGMAFHGGFLGVVVAMWLF, FIAPMIPCGLAAGRIGNFING, SQLYQFAGEGVALFIVLWLFA, MGAVSGVFLIGYGAFRFAAEF, and LSMGQWLSLPMILAGIAMVVW. A 1,2-diacyl-sn-glycero-3-phospho-(1'-sn-glycerol) is bound at residue arginine 142.

The protein belongs to the Lgt family.

The protein localises to the cell inner membrane. The catalysed reaction is L-cysteinyl-[prolipoprotein] + a 1,2-diacyl-sn-glycero-3-phospho-(1'-sn-glycerol) = an S-1,2-diacyl-sn-glyceryl-L-cysteinyl-[prolipoprotein] + sn-glycerol 1-phosphate + H(+). It participates in protein modification; lipoprotein biosynthesis (diacylglyceryl transfer). Functionally, catalyzes the transfer of the diacylglyceryl group from phosphatidylglycerol to the sulfhydryl group of the N-terminal cysteine of a prolipoprotein, the first step in the formation of mature lipoproteins. This is Phosphatidylglycerol--prolipoprotein diacylglyceryl transferase from Cupriavidus necator (strain ATCC 17699 / DSM 428 / KCTC 22496 / NCIMB 10442 / H16 / Stanier 337) (Ralstonia eutropha).